The chain runs to 331 residues: Beta-ketoacyl-[acyl-carrier-protein] synthase III (331 aa).

Residues Cys-115 and His-255 contribute to the active site. The segment at 256 to 260 is ACP-binding; it reads QANFR. Asn-285 is an active-site residue.

Belongs to the thiolase-like superfamily. FabH family. Homodimer.

The protein resides in the cytoplasm. It carries out the reaction malonyl-[ACP] + acetyl-CoA + H(+) = 3-oxobutanoyl-[ACP] + CO2 + CoA. The protein operates within lipid metabolism; fatty acid biosynthesis. Catalyzes the condensation reaction of fatty acid synthesis by the addition to an acyl acceptor of two carbons from malonyl-ACP. Catalyzes the first condensation reaction which initiates fatty acid synthesis and may therefore play a role in governing the total rate of fatty acid production. Possesses both acetoacetyl-ACP synthase and acetyl transacylase activities. Its substrate specificity determines the biosynthesis of branched-chain and/or straight-chain of fatty acids. The protein is Beta-ketoacyl-[acyl-carrier-protein] synthase III of Helicobacter pylori (strain Shi470).